The following is a 377-amino-acid chain: Protein-tyrosine sulfotransferase 2 (377 aa).

Residues 1-8 (MRLSVRRV) lie on the Cytoplasmic side of the membrane. Residues 9–25 (LLAAGCALVLVLAVQLG) form a helical; Signal-anchor for type II membrane protein membrane-spanning segment. Residues 26–377 (QQVLECRAVL…NSTSSHLGSS (352 aa)) are Lumenal-facing. 78-82 (RSGTT) is a binding site for 3'-phosphoadenylyl sulfate. A disulfide bond links Cys-96 and Cys-156. Glu-99 serves as the catalytic Proton donor/acceptor. The interaction with peptide substrate stretch occupies residues 101–105 (RIIPR). Residues Arg-183, Ser-191, and Arg-195 each coordinate 3'-phosphoadenylyl sulfate. Cys-225 and Cys-233 form a disulfide bridge. 3'-phosphoadenylyl sulfate-binding positions include Tyr-238, 285-294 (STDQVIKPVN), and Lys-300. N-linked (GlcNAc...) asparagine glycans are attached at residues Asn-343 and Asn-368.

Belongs to the protein sulfotransferase family. In terms of assembly, homodimer. Can also form heterodimers with TPST1. N-glycosylated. Widely expressed.

Its subcellular location is the golgi apparatus membrane. The catalysed reaction is L-tyrosyl-[protein] + 3'-phosphoadenylyl sulfate = O-sulfo-L-tyrosine-[protein] + adenosine 3',5'-bisphosphate + H(+). Functionally, catalyzes the O-sulfation of tyrosine residues within acidic motifs of polypeptides, using 3'-phosphoadenylyl sulfate (PAPS) as cosubstrate. The protein is Protein-tyrosine sulfotransferase 2 (TPST2) of Homo sapiens (Human).